A 51-amino-acid polypeptide reads, in one-letter code: 2,3,4,5-tetrahydropyridine-2,6-dicarboxylate N-succinyltransferase (51 aa).

This sequence belongs to the transferase hexapeptide repeat family. Homotrimer.

It is found in the cytoplasm. It carries out the reaction (S)-2,3,4,5-tetrahydrodipicolinate + succinyl-CoA + H2O = (S)-2-succinylamino-6-oxoheptanedioate + CoA. It participates in amino-acid biosynthesis; L-lysine biosynthesis via DAP pathway; LL-2,6-diaminopimelate from (S)-tetrahydrodipicolinate (succinylase route): step 1/3. The chain is 2,3,4,5-tetrahydropyridine-2,6-dicarboxylate N-succinyltransferase (dapD) from Klebsiella oxytoca.